The following is a 354-amino-acid chain: DNA polymerase IV (354 aa).

Residues 6–187 (IIHVDCDCFY…LPVARLHGVG (182 aa)) enclose the UmuC domain. 2 residues coordinate Mg(2+): Asp10 and Asp105. Residue Glu106 is part of the active site.

The protein belongs to the DNA polymerase type-Y family. Monomer. It depends on Mg(2+) as a cofactor.

The protein localises to the cytoplasm. It carries out the reaction DNA(n) + a 2'-deoxyribonucleoside 5'-triphosphate = DNA(n+1) + diphosphate. In terms of biological role, poorly processive, error-prone DNA polymerase involved in untargeted mutagenesis. Copies undamaged DNA at stalled replication forks, which arise in vivo from mismatched or misaligned primer ends. These misaligned primers can be extended by PolIV. Exhibits no 3'-5' exonuclease (proofreading) activity. May be involved in translesional synthesis, in conjunction with the beta clamp from PolIII. In Pseudomonas putida (strain ATCC 47054 / DSM 6125 / CFBP 8728 / NCIMB 11950 / KT2440), this protein is DNA polymerase IV.